We begin with the raw amino-acid sequence, 397 residues long: P2X purinoceptor 3 (397 aa).

The Cytoplasmic portion of the chain corresponds to 1 to 20; that stretch reads MNCISDFFTYETTKSVVVKS. Residues 21–43 form a helical membrane-spanning segment; sequence WTIGIINRAVQLLIISYFVGWVF. At 44-322 the chain is on the extracellular side; that stretch reads LHEKAYQVRD…AGKFNIIPTI (279 aa). ATP-binding residues include Lys63 and Lys65. 3 disulfide bridges follow: Cys107–Cys153, Cys116–Cys137, and Cys122–Cys147. Glu111 is a binding site for Mg(2+). Asn139 is a glycosylation site (N-linked (GlcNAc...) asparagine). Asp158 is a binding site for Mg(2+). A Ca(2+)-binding site is contributed by Asp158. Asn170 is a glycosylation site (N-linked (GlcNAc...) asparagine). Thr172 is an ATP binding site. A glycan (N-linked (GlcNAc...) asparagine) is linked at Asn194. Disulfide bonds link Cys203–Cys213 and Cys247–Cys256. ATP is bound by residues Ser275, Asn279, and Arg281. N-linked (GlcNAc...) asparagine glycosylation is present at Asn290. Lys299 is a binding site for ATP. Residues 323–341 traverse the membrane as a helical segment; it reads ISSVAAFTSVGVGTVLCDI. Topologically, residues 342–397 are cytoplasmic; sequence ILLNFLKGADHYKARKFEEVTETTLKGTASTNPVFASDQATVEKQSTDSGAYSIGH.

The protein belongs to the P2X receptor family. As to quaternary structure, homotrimer. Forms heterotrimer with P2RX2. Heterotrimeric P2RX2/3 has a ligand dose-response profile that is distinct from either homotrimeric P2RX2 or P2RX3. In terms of tissue distribution, selectively expressed in sensory ganglia.

Its subcellular location is the cell membrane. The catalysed reaction is Ca(2+)(in) = Ca(2+)(out). The enzyme catalyses Na(+)(in) = Na(+)(out). Has high sensitivity to ATP. Fast activation by external ATP. Exhibits rapid desensitization. Sensitives to the ATP agonist:alpha/beta-methylene-ATP. Subject to allosteric inhibition by AF-219. Mg(2+) and Ca(2+) slow deactivation of P2RX3. In terms of biological role, extracellular ATP-activated non-selective cation channel. Plays particularly important role in sensory neurons where its activation is critical for gustatory, nociceptive responses, visceral reflexes and sensory hypersensitization. This is P2X purinoceptor 3 (P2rx3) from Rattus norvegicus (Rat).